The primary structure comprises 727 residues: ATP-dependent zinc metalloprotease FtsH (727 aa).

Topologically, residues 1–6 (MQKAFR) are cytoplasmic. The chain crosses the membrane as a helical span at residues 7–27 (NVLVIAIIGVIIFGVFSYING). At 28-110 (NGNTPKQLSY…KVKEEEKQSV (83 aa)) the chain is on the extracellular side. A helical membrane pass occupies residues 111–131 (FVSMLTTLIPVLIIAFLFIFF). Residues 132 to 727 (LSQAQGGGGG…PNDPNNPSNR (596 aa)) are Cytoplasmic-facing. 205–212 (GPPGTGKT) serves as a coordination point for ATP. His-427 is a Zn(2+) binding site. Glu-428 is an active-site residue. Zn(2+) is bound by residues His-431 and Asp-503. 2 stretches are compositionally biased toward basic and acidic residues: residues 645–684 (LEEG…DQLR) and 691–706 (NDQH…DTGH). The segment at 645–727 (LEEGKEDMRE…PNDPNNPSNR (83 aa)) is disordered. Residues 710 to 727 (PNIDKPYNPNDPNNPSNR) are compositionally biased toward low complexity.

It in the central section; belongs to the AAA ATPase family. The protein in the C-terminal section; belongs to the peptidase M41 family. In terms of assembly, homohexamer. The cofactor is Zn(2+).

The protein resides in the cell membrane. Functionally, acts as a processive, ATP-dependent zinc metallopeptidase for both cytoplasmic and membrane proteins. Plays a role in the quality control of integral membrane proteins. The sequence is that of ATP-dependent zinc metalloprotease FtsH from Staphylococcus haemolyticus (strain JCSC1435).